Consider the following 448-residue polypeptide: MSASGPEAPGDIPALPPPPQPGSGPAPPAPAAAAQEAMDGRAELPAFPRAGAPPLAASDTVPAAPEGAGAARPAAPLRPTSFSVLDILDPNKFNSRRRRCVLLGPVAPAACAPCASAPCAPAPAASGRPPRAEELERRALAGAGGVGAAGAEPPNAGDPFKAGEAETNDTNGYSSGGGGHSPSADSGDEVPDDEDDDEDEAPETEAARGAEEARGGGGGLGARGSGCQGAAETDASPGATVDEAAAPGPRENSPVAQGPPGGAAAPGGAGTTPQGTATAAKPKRKRTGSDSKSGKPRRARTAFTYEQLVALENKFKATRYLSVCERLNLALSLSLTETQVKIWFQNRRTKWKKQNPGADTSAPTGGGGGPGPGAGPGTGLPGGLSPLSPSPPMGAPLGMHGPAGYPAHGPGGLVCAAQLPFLSSPAVLSPFVLGSQTYGAPAFYAPHL.

Over residues 1-13 (MSASGPEAPGDIP) the composition is skewed to low complexity. Disordered regions lie at residues 1-80 (MSAS…LRPT), 115-299 (ASAP…PRRA), and 350-397 (KWKK…GAPL). A compositionally biased stretch (pro residues) spans 14 to 30 (ALPPPPQPGSGPAPPAP). Low complexity-rich tracts occupy residues 62–79 (PAAP…PLRP) and 115–129 (ASAP…SGRP). The span at 130 to 139 (PRAEELERRA) shows a compositional bias: basic and acidic residues. Positions 186–203 (SGDEVPDDEDDDEDEAPE) are enriched in acidic residues. The span at 205–214 (EAARGAEEAR) shows a compositional bias: basic and acidic residues. Composition is skewed to gly residues over residues 215-227 (GGGG…GSGC) and 259-270 (PPGGAAAPGGAG). The span at 271–280 (TTPQGTATAA) shows a compositional bias: low complexity. A DNA-binding region (homeobox) is located at residues 296-355 (PRRARTAFTYEQLVALENKFKATRYLSVCERLNLALSLSLTETQVKIWFQNRRTKWKKQN). Gly residues predominate over residues 364–382 (TGGGGGPGPGAGPGTGLPG).

Belongs to the NK-1 homeobox family. Expressed in hemopoietic progenitor cells.

The protein resides in the nucleus. May be required for the coordinated crosstalk of factors involved in the maintenance of energy homeostasis, possibly by regulating the transcription of specific factors involved in energy balance. This Homo sapiens (Human) protein is NK1 transcription factor-related protein 1.